We begin with the raw amino-acid sequence, 663 residues long: Innate immunity activator protein (663 aa).

The disordered stretch occupies residues 1–68 (MLQMPKLNEI…RLPTQPGPGW (68 aa)). A compositionally biased stretch (low complexity) spans 40–50 (RAQGQAGGARA). Residues 118–147 (AVHKQQRALEARLEACLEELRRLCLREAEL) are a coiled coil. Positions 164 to 170 (PKVRRRI) match the Nuclear localization signal (NLS) 1 motif. Disordered stretches follow at residues 242–362 (RRRN…ASSL), 378–425 (VPGQ…PRRR), and 444–493 (PLPH…RHRG). Residues 259–272 (ELSASDDSSLSDGL) are compositionally biased toward low complexity. The segment covering 282 to 298 (PKPPPESPAPPSRPLPP) has biased composition (pro residues). A compositionally biased stretch (basic and acidic residues) spans 327–340 (TSLDHPYEKPRKSS). The short motif at 332 to 338 (PYEKPRK) is the Nuclear localization signal (NLS) 2 element. The span at 350–361 (ATTPQDGPSASS) shows a compositional bias: polar residues. The Nuclear localization signal (NLS) 3 motif lies at 422–428 (PRRRPTH). Positions 455–475 (EDSGSDVSSISHPTSPGSSSP) are enriched in low complexity.

As to quaternary structure, interacts with IRAK1, NOD2 and RIPK2; the interaction takes place upon PRR stimulation. Interacts with YWHAQ/14-3-3T; the interaction increases upon PRR stimulation and is required for cellular signaling pathway activation and cytokine secretion. Interacts (via N-terminal domain) with CYTH1 and CYTH2 (via their N-terminal domains). Interacts with FBXW11 and BTRC; associates with SCF E3 ubiquitin-protein ligase complexes. In terms of tissue distribution, highly expressed in intestinal myeloid-derived cells and expressed in monocyte-derived macrophages upon induction by PRR activation.

It is found in the nucleus. The protein resides in the cytoplasm. Its function is as follows. Expressed in peripheral macrophages and intestinal myeloid-derived cells, is required for optimal PRR (pattern recognition receptor)-induced signaling, cytokine secretion, and bacterial clearance. Upon stimulation of a broad range of PRRs (pattern recognition receptor) such as NOD2 or TLR2, TLR3, TLR4, TLR5, TLR7 and TLR9, associates with YWHAQ/14-3-3T, which in turn leads to the recruitment and activation of MAP kinases and NF-kappa-B signaling complexes that amplifies PRR-induced downstream signals and cytokine secretion. In the intestine, regulates adherens junction stability by regulating the degradation of CYTH1 and CYTH2, probably acting as substrate cofactor for SCF E3 ubiquitin-protein ligase complexes. Stabilizes adherens junctions by limiting CYTH1-dependent ARF6 activation. The chain is Innate immunity activator protein from Homo sapiens (Human).